Reading from the N-terminus, the 165-residue chain is LOB domain-containing protein 21 (165 aa).

The LOB domain maps to 10–111 (SSCAACKLLK…HDLAVARTRL (102 aa)).

The protein belongs to the LOB domain-containing protein family.

The sequence is that of LOB domain-containing protein 21 (LBD21) from Arabidopsis thaliana (Mouse-ear cress).